The primary structure comprises 150 residues: Large ribosomal subunit protein uL13 (150 aa).

Residues 129–150 are disordered; that stretch reads TEHPHAAQKPQPLQLNPSASAQ. Residues 139-150 show a composition bias toward polar residues; it reads QPLQLNPSASAQ.

The protein belongs to the universal ribosomal protein uL13 family. Part of the 50S ribosomal subunit.

Functionally, this protein is one of the early assembly proteins of the 50S ribosomal subunit, although it is not seen to bind rRNA by itself. It is important during the early stages of 50S assembly. This is Large ribosomal subunit protein uL13 from Synechococcus sp. (strain CC9605).